The chain runs to 534 residues: 2,3-bisphosphoglycerate-independent phosphoglycerate mutase (534 aa).

Asp15 and Ser65 together coordinate Mn(2+). Ser65 acts as the Phosphoserine intermediate in catalysis. Substrate is bound by residues His126, 156–157, Arg188, Arg194, 260–263, and Lys333; these read RD and RPDR. Positions 400, 404, 441, 442, and 459 each coordinate Mn(2+).

This sequence belongs to the BPG-independent phosphoglycerate mutase family. Monomer. Mn(2+) is required as a cofactor.

The catalysed reaction is (2R)-2-phosphoglycerate = (2R)-3-phosphoglycerate. It participates in carbohydrate degradation; glycolysis; pyruvate from D-glyceraldehyde 3-phosphate: step 3/5. Catalyzes the interconversion of 2-phosphoglycerate and 3-phosphoglycerate. This is 2,3-bisphosphoglycerate-independent phosphoglycerate mutase from Acaryochloris marina (strain MBIC 11017).